The following is a 485-amino-acid chain: Protein nucleotidyltransferase YdiU (485 aa).

Positions 85, 87, 88, 108, 120, 121, 171, and 178 each coordinate ATP. Aspartate 249 acts as the Proton acceptor in catalysis. Residues asparagine 250 and aspartate 259 each contribute to the Mg(2+) site. Aspartate 259 contributes to the ATP binding site. Residues 462 to 485 form a disordered region; that stretch reads LPTTPNYQDPPADGDRSYQTFCGT.

This sequence belongs to the SELO family. The cofactor is Mg(2+). Mn(2+) is required as a cofactor.

It catalyses the reaction L-seryl-[protein] + ATP = 3-O-(5'-adenylyl)-L-seryl-[protein] + diphosphate. It carries out the reaction L-threonyl-[protein] + ATP = 3-O-(5'-adenylyl)-L-threonyl-[protein] + diphosphate. The enzyme catalyses L-tyrosyl-[protein] + ATP = O-(5'-adenylyl)-L-tyrosyl-[protein] + diphosphate. The catalysed reaction is L-histidyl-[protein] + UTP = N(tele)-(5'-uridylyl)-L-histidyl-[protein] + diphosphate. It catalyses the reaction L-seryl-[protein] + UTP = O-(5'-uridylyl)-L-seryl-[protein] + diphosphate. It carries out the reaction L-tyrosyl-[protein] + UTP = O-(5'-uridylyl)-L-tyrosyl-[protein] + diphosphate. Functionally, nucleotidyltransferase involved in the post-translational modification of proteins. It can catalyze the addition of adenosine monophosphate (AMP) or uridine monophosphate (UMP) to a protein, resulting in modifications known as AMPylation and UMPylation. The sequence is that of Protein nucleotidyltransferase YdiU from Teredinibacter turnerae (strain ATCC 39867 / T7901).